We begin with the raw amino-acid sequence, 466 residues long: UDP-N-acetylmuramoylalanine--D-glutamate ligase (466 aa).

Gly121 to Thr127 contacts ATP.

This sequence belongs to the MurCDEF family.

Its subcellular location is the cytoplasm. The catalysed reaction is UDP-N-acetyl-alpha-D-muramoyl-L-alanine + D-glutamate + ATP = UDP-N-acetyl-alpha-D-muramoyl-L-alanyl-D-glutamate + ADP + phosphate + H(+). It participates in cell wall biogenesis; peptidoglycan biosynthesis. Cell wall formation. Catalyzes the addition of glutamate to the nucleotide precursor UDP-N-acetylmuramoyl-L-alanine (UMA). This is UDP-N-acetylmuramoylalanine--D-glutamate ligase from Bradyrhizobium diazoefficiens (strain JCM 10833 / BCRC 13528 / IAM 13628 / NBRC 14792 / USDA 110).